The primary structure comprises 274 residues: Glutamate--cysteine ligase regulatory subunit (274 aa).

Ser59 is subject to Phosphoserine. Lys263 carries the post-translational modification N6-acetyllysine.

Belongs to the aldo/keto reductase family. Glutamate--cysteine ligase light chain subfamily. As to quaternary structure, heterodimer of a catalytic heavy chain and a regulatory light chain. As to expression, most abundant in kidney. Also found in liver and testis.

It participates in sulfur metabolism; glutathione biosynthesis; glutathione from L-cysteine and L-glutamate: step 1/2. The sequence is that of Glutamate--cysteine ligase regulatory subunit (Gclm) from Rattus norvegicus (Rat).